The chain runs to 117 residues: Iron-sulfur cluster insertion protein ErpA (117 aa).

Cys45, Cys109, and Cys111 together coordinate iron-sulfur cluster.

The protein belongs to the HesB/IscA family. Homodimer. Requires iron-sulfur cluster as cofactor.

Its function is as follows. Required for insertion of 4Fe-4S clusters for at least IspG. The sequence is that of Iron-sulfur cluster insertion protein ErpA from Chromohalobacter salexigens (strain ATCC BAA-138 / DSM 3043 / CIP 106854 / NCIMB 13768 / 1H11).